A 319-amino-acid polypeptide reads, in one-letter code: tRNA dimethylallyltransferase (319 aa).

9-16 is a binding site for ATP; sequence GPTAVGKS. 11–16 contributes to the substrate binding site; it reads TAVGKS. Residues 39–42 are interaction with substrate tRNA; it reads DSMQ.

It belongs to the IPP transferase family. Monomer. Mg(2+) serves as cofactor.

It catalyses the reaction adenosine(37) in tRNA + dimethylallyl diphosphate = N(6)-dimethylallyladenosine(37) in tRNA + diphosphate. In terms of biological role, catalyzes the transfer of a dimethylallyl group onto the adenine at position 37 in tRNAs that read codons beginning with uridine, leading to the formation of N6-(dimethylallyl)adenosine (i(6)A). This is tRNA dimethylallyltransferase from Thermobifida fusca (strain YX).